The sequence spans 361 residues: Monodechloroaminopyrrolnitrin synthase PrnB (361 aa).

222–225 serves as a coordination point for substrate; it reads PGAV. Residue His-313 coordinates heme. The substrate site is built by Tyr-321 and Ser-332.

It belongs to the PrnB family. As to quaternary structure, monomer. Heme b serves as cofactor.

It catalyses the reaction 7-chloro-L-tryptophan + AH2 + O2 = monodechloroaminopyrrolnitrin + A + CO2 + 2 H2O. The protein operates within antibiotic biosynthesis. Involved in the biosynthesis of the antifungal antibiotic pyrrolnitrin. Catalyzes the ring rearrangement and decarboxylation to convert 7-chloro-L-tryptophan (7-CLT) to monodechloroaminopyrrolnitrin (MDA). It can also use 7-chloro-D-tryptophan, but 7-chloro-L-tryptophan is the preferred natural enantiomer. The sequence is that of Monodechloroaminopyrrolnitrin synthase PrnB (prnB) from Pseudomonas fluorescens.